The sequence spans 500 residues: Probable cytosol aminopeptidase (500 aa).

Mn(2+) is bound by residues lysine 274 and aspartate 279. The active site involves lysine 286. Aspartate 297, aspartate 356, and glutamate 358 together coordinate Mn(2+). Arginine 360 is an active-site residue.

This sequence belongs to the peptidase M17 family. It depends on Mn(2+) as a cofactor.

It localises to the cytoplasm. It catalyses the reaction Release of an N-terminal amino acid, Xaa-|-Yaa-, in which Xaa is preferably Leu, but may be other amino acids including Pro although not Arg or Lys, and Yaa may be Pro. Amino acid amides and methyl esters are also readily hydrolyzed, but rates on arylamides are exceedingly low.. The catalysed reaction is Release of an N-terminal amino acid, preferentially leucine, but not glutamic or aspartic acids.. In terms of biological role, presumably involved in the processing and regular turnover of intracellular proteins. Catalyzes the removal of unsubstituted N-terminal amino acids from various peptides. The chain is Probable cytosol aminopeptidase from Saccharophagus degradans (strain 2-40 / ATCC 43961 / DSM 17024).